Here is a 141-residue protein sequence, read N- to C-terminus: Ribonuclease P protein component (141 aa).

2 disordered regions span residues 37–56 (RTEEESNAAKTGDNPRVGFT) and 114–141 (RRITAKGERRSGRKRRTERPEPGPVNGK). Over residues 114–123 (RRITAKGERR) the composition is skewed to basic and acidic residues.

Belongs to the RnpA family. In terms of assembly, consists of a catalytic RNA component (M1 or rnpB) and a protein subunit.

The enzyme catalyses Endonucleolytic cleavage of RNA, removing 5'-extranucleotides from tRNA precursor.. RNaseP catalyzes the removal of the 5'-leader sequence from pre-tRNA to produce the mature 5'-terminus. It can also cleave other RNA substrates such as 4.5S RNA. The protein component plays an auxiliary but essential role in vivo by binding to the 5'-leader sequence and broadening the substrate specificity of the ribozyme. The chain is Ribonuclease P protein component from Brucella suis biovar 1 (strain 1330).